The chain runs to 117 residues: Large ribosomal subunit protein bL20 (117 aa).

Belongs to the bacterial ribosomal protein bL20 family.

Binds directly to 23S ribosomal RNA and is necessary for the in vitro assembly process of the 50S ribosomal subunit. It is not involved in the protein synthesizing functions of that subunit. This chain is Large ribosomal subunit protein bL20, found in Actinobacillus pleuropneumoniae serotype 7 (strain AP76).